We begin with the raw amino-acid sequence, 135 residues long: PTS system sorbose-specific EIIA component (135 aa).

The region spanning Met1–Val131 is the PTS EIIA type-4 domain. The Tele-phosphohistidine intermediate role is filled by His9. His9 is modified (phosphohistidine; by HPr).

Its subcellular location is the cytoplasm. Its function is as follows. The phosphoenolpyruvate-dependent sugar phosphotransferase system (PTS), a major carbohydrate active transport system, catalyzes the phosphorylation of incoming sugar substrates concomitant with their translocation across the cell membrane. The enzyme II SorABFM PTS system is involved in L-sorbose transport. The protein is PTS system sorbose-specific EIIA component of Klebsiella pneumoniae.